A 463-amino-acid chain; its full sequence is Cysteine--tRNA ligase (463 aa).

Position 27 (C27) interacts with Zn(2+). The 'HIGH' region signature appears at 29–39 (ATVQGLPHIGH). Zn(2+) is bound by residues C205, H230, and E234. Residues 261 to 265 (KMSKS) carry the 'KMSKS' region motif. Residue K264 participates in ATP binding.

Belongs to the class-I aminoacyl-tRNA synthetase family. As to quaternary structure, monomer. Zn(2+) is required as a cofactor.

Its subcellular location is the cytoplasm. It catalyses the reaction tRNA(Cys) + L-cysteine + ATP = L-cysteinyl-tRNA(Cys) + AMP + diphosphate. In Mycolicibacterium vanbaalenii (strain DSM 7251 / JCM 13017 / BCRC 16820 / KCTC 9966 / NRRL B-24157 / PYR-1) (Mycobacterium vanbaalenii), this protein is Cysteine--tRNA ligase.